The sequence spans 445 residues: FAS-associated factor 2 (445 aa).

N-acetylalanine is present on alanine 2. The UBA domain occupies glutamate 12 to glutamine 48. Lysine 167 carries the N6-acetyllysine modification. A coiled-coil region spans residues serine 275–leucine 350. The tract at residues alanine 299–serine 361 is disordered. The segment covering alanine 303 to glutamate 348 has biased composition (basic and acidic residues). The UBX domain occupies aspartate 357–valine 439.

As to quaternary structure, identified in a complex that contains SEL1L, OS9, FAF2/UBXD8, UBE2J1/UBC6E and AUP1. Interacts with YOD1. Interacts (via N-terminus) with UBQLN2 (via C-terminus). Interacts with PNPLA2 and UBAC2. Interacts with ZFAND2B; probably through VCP. Interacts with LMBR1L.

It localises to the cytoplasm. It is found in the lipid droplet. Its subcellular location is the endoplasmic reticulum. Functionally, plays an important role in endoplasmic reticulum-associated degradation (ERAD) that mediates ubiquitin-dependent degradation of misfolded endoplasmic reticulum proteins. By controlling the steady-state expression of the IGF1R receptor, indirectly regulates the insulin-like growth factor receptor signaling pathway. Involved in inhibition of lipid droplet degradation by binding to phospholipase PNPL2 and inhibiting its activity by promoting dissociation of PNPL2 from its endogenous activator, ABHD5 which inhibits the rate of triacylglycerol hydrolysis. Involved in stress granule disassembly: associates with ubiquitinated G3BP1 in response to heat shock, thereby promoting interaction between ubiquitinated G3BP1 and VCP, followed by G3BP1 extraction from stress granules and stress granule disassembly. This Bos taurus (Bovine) protein is FAS-associated factor 2 (FAF2).